Consider the following 145-residue polypeptide: 3-hydroxyacyl-[acyl-carrier-protein] dehydratase FabZ (145 aa).

His-49 is an active-site residue.

This sequence belongs to the thioester dehydratase family. FabZ subfamily.

The protein localises to the cytoplasm. It carries out the reaction a (3R)-hydroxyacyl-[ACP] = a (2E)-enoyl-[ACP] + H2O. In terms of biological role, involved in unsaturated fatty acids biosynthesis. Catalyzes the dehydration of short chain beta-hydroxyacyl-ACPs and long chain saturated and unsaturated beta-hydroxyacyl-ACPs. In Rickettsia typhi (strain ATCC VR-144 / Wilmington), this protein is 3-hydroxyacyl-[acyl-carrier-protein] dehydratase FabZ.